The following is a 551-amino-acid chain: Glucans biosynthesis protein D (551 aa).

The tat-type signal signal peptide spans 1–32; it reads MNRRRFLQGSLAMAALSGTTGLSTLFSRAAFA.

It belongs to the OpgD/OpgG family. Predicted to be exported by the Tat system. The position of the signal peptide cleavage has not been experimentally proven.

It is found in the periplasm. The protein operates within glycan metabolism; osmoregulated periplasmic glucan (OPG) biosynthesis. Its function is as follows. Probably involved in the control of the structural glucose backbone of osmoregulated periplasmic glucans (OPGs). This chain is Glucans biosynthesis protein D, found in Enterobacter sp. (strain 638).